A 207-amino-acid polypeptide reads, in one-letter code: Small ribosomal subunit protein bS6c (207 aa).

The N-terminal 59 residues, 1–59 (MASSLCVSNSTICPLPNVSSQPLLSFSHSLRPFISKSKPMCASIQKRDGSQFVVKSQAL), are a transit peptide targeting the chloroplast. A disordered region spans residues 69–99 (GFGSDDDPTSPSGSGVSTALEDKPEPQCPPG). Residues 77-86 (TSPSGSGVST) are compositionally biased toward low complexity.

It belongs to the bacterial ribosomal protein bS6 family. As to quaternary structure, part of the 30S ribosomal subunit.

Its subcellular location is the plastid. It is found in the chloroplast. Binds together with bS18 to 16S ribosomal RNA. This chain is Small ribosomal subunit protein bS6c (RPS6), found in Arabidopsis thaliana (Mouse-ear cress).